A 230-amino-acid polypeptide reads, in one-letter code: Uracil-DNA glycosylase (230 aa).

The active-site Proton acceptor is D70.

It belongs to the uracil-DNA glycosylase (UDG) superfamily. UNG family.

The protein localises to the cytoplasm. It catalyses the reaction Hydrolyzes single-stranded DNA or mismatched double-stranded DNA and polynucleotides, releasing free uracil.. Excises uracil residues from the DNA which can arise as a result of misincorporation of dUMP residues by DNA polymerase or due to deamination of cytosine. This is Uracil-DNA glycosylase from Pseudomonas putida (strain ATCC 700007 / DSM 6899 / JCM 31910 / BCRC 17059 / LMG 24140 / F1).